A 336-amino-acid polypeptide reads, in one-letter code: Ankyrin repeat and SOCS box protein 1 (336 aa).

6 ANK repeats span residues cysteine 37–glutamate 69, leucine 78–leucine 107, lysine 111–glycine 140, histidine 144–valine 173, leucine 192–phenylalanine 221, and serine 236–leucine 266. The SOCS box domain occupies leucine 287–glutamate 336.

It belongs to the ankyrin SOCS box (ASB) family. Interacts with CUL5 and RNF7. As to expression, highest expression in testis, spleen, bone marrow and salivary gland.

It functions in the pathway protein modification; protein ubiquitination. Probable substrate-recognition component of a SCF-like ECS (Elongin-Cullin-SOCS-box protein) E3 ligase complex which mediates the ubiquitination and subsequent proteasomal degradation of target proteins. Mediates Notch-induced ubiquitination and degradation of TCF3/E2A and JAK2. May play a role in testis development. This Mus musculus (Mouse) protein is Ankyrin repeat and SOCS box protein 1 (Asb1).